The primary structure comprises 242 residues: DNA-directed RNA polymerase III subunit rpc5 (242 aa).

Disordered regions lie at residues 1–22 and 153–172; these read MSFS…TEEQ and LKAA…PRGP. Residues 155–172 show a composition bias toward low complexity; that stretch reads AAAGPSNSSSGTSTPRGP.

In terms of assembly, component of the RNA polymerase III (Pol III) complex consisting of 17 subunits.

It localises to the cytoplasm. The protein localises to the nucleus. DNA-dependent RNA polymerase catalyzes the transcription of DNA into RNA using the four ribonucleoside triphosphates as substrates. Specific peripheric component of RNA polymerase III which synthesizes small RNAs, such as 5S rRNA and tRNAs. The RPC53/RPC4-RPC37/RPC5 subcomplex is required for terminator recognition and reinitiation. The sequence is that of DNA-directed RNA polymerase III subunit rpc5 (rpc37) from Schizosaccharomyces pombe (strain 972 / ATCC 24843) (Fission yeast).